A 206-amino-acid polypeptide reads, in one-letter code: Threonine efflux protein (206 aa).

Residues 1-21 (MLMLFLTVAMVHIVALMSPGP) traverse the membrane as a helical segment. Residues 22-43 (DFFFVSQTAVSRSRKEAMMGVL) lie on the Periplasmic side of the membrane. A helical membrane pass occupies residues 44–64 (GITCGVMVWAGIALLGLHLII). The Cytoplasmic portion of the chain corresponds to 65 to 66 (EK). Residues 67 to 87 (MAWLHTLIMVGGGLYLCWMGY) form a helical membrane-spanning segment. Over 88–149 (QMLRGALKKE…VGDNVGTTAR (62 aa)) the chain is Periplasmic. Residues 150–173 (WGIFALIIVETLAWFTVVASLFAL) traverse the membrane as a helical segment. Over 174–206 (PQMRRGYQRLAKWIDGFAGALFAGFGIHLIISR) the chain is Cytoplasmic.

It belongs to the Rht family.

The protein resides in the cell inner membrane. Functionally, conducts the efflux of threonine. This chain is Threonine efflux protein (rhtC), found in Escherichia coli O157:H7.